The chain runs to 504 residues: Tegument protein VP16 homolog (504 aa).

Disordered stretches follow at residues 354–381 (EAGGGWRRSGSTRTRGRAARSTTGRLQR), 395–421 (ATPRQRLRARGEPRHTSGSGAFSQGRR), and 435–486 (RSGP…ANPF). Over residues 361–378 (RSGSTRTRGRAARSTTGR) the composition is skewed to low complexity. A compositionally biased stretch (low complexity) spans 447–460 (PVRSGLGLSRARGS).

The protein belongs to the herpesviridae tegument protein VP16 protein family. In terms of assembly, associates with the VP16-induced complex; binding to host HCFC1 activates VP16 for association with the octamer motif-binding host protein POU2F1, to form a multiprotein-DNA complex responsible for activating transcription of the viral immediate early genes.

It is found in the virion tegument. Its subcellular location is the host nucleus. Its function is as follows. Transcriptional activator of immediate-early (IE) gene products (alpha genes). Acts as a key activator of lytic infection by initiating the lytic program through the assembly of the transcriptional regulatory VP16-induced complex composed of VP16 and two cellular factors, HCFC1 and POU2F1. VP16-induced complex represents a regulatory switch: when it is on, it promotes IE-gene expression and thus lytic infection, and when it is off, it limits IE-gene transcription favoring latent infection. In terms of biological role, may play a role in the aggregation of tegument proteins around nucleocapsids during virus morphogenesis. The chain is Tegument protein VP16 homolog from Bos taurus (Bovine).